The chain runs to 182 residues: Ribosome maturation factor RimM (182 aa).

The 80-residue stretch at 103–182 folds into the PRC barrel domain; that stretch reads DGSYYWKDLM…TIEVDWDPGF (80 aa).

This sequence belongs to the RimM family. In terms of assembly, binds ribosomal protein uS19.

The protein localises to the cytoplasm. An accessory protein needed during the final step in the assembly of 30S ribosomal subunit, possibly for assembly of the head region. Essential for efficient processing of 16S rRNA. May be needed both before and after RbfA during the maturation of 16S rRNA. It has affinity for free ribosomal 30S subunits but not for 70S ribosomes. In Citrobacter koseri (strain ATCC BAA-895 / CDC 4225-83 / SGSC4696), this protein is Ribosome maturation factor RimM.